We begin with the raw amino-acid sequence, 255 residues long: Putative expansin-A27 (255 aa).

Residues 1–24 form the signal peptide; it reads MGAMAENLLVLCTILAARMALAAA. The Expansin-like EG45 domain occupies 45 to 160; sequence GGACGYGNLY…RRVRCWRRGG (116 aa). Positions 170-249 constitute an Expansin-like CBD domain; the sequence is HFELVLVANV…GWKFGQTFST (80 aa).

The protein belongs to the expansin family. Expansin A subfamily.

The protein resides in the secreted. The protein localises to the cell wall. It is found in the membrane. Functionally, may cause loosening and extension of plant cell walls by disrupting non-covalent bonding between cellulose microfibrils and matrix glucans. No enzymatic activity has been found. May be required for rapid internodal elongation in deepwater rice during submergence. The protein is Putative expansin-A27 (EXPA27) of Oryza sativa subsp. japonica (Rice).